The following is a 710-amino-acid chain: Elongation factor G (710 aa).

Positions 8-297 constitute a tr-type G domain; that stretch reads ERVRNIGIAA…AVVDYLPSPI (290 aa). Residues 17-24, 96-100, and 150-153 each bind GTP; these read AHIDAGKT, DTPGH, and NKMD.

This sequence belongs to the TRAFAC class translation factor GTPase superfamily. Classic translation factor GTPase family. EF-G/EF-2 subfamily.

The protein resides in the cytoplasm. Functionally, catalyzes the GTP-dependent ribosomal translocation step during translation elongation. During this step, the ribosome changes from the pre-translocational (PRE) to the post-translocational (POST) state as the newly formed A-site-bound peptidyl-tRNA and P-site-bound deacylated tRNA move to the P and E sites, respectively. Catalyzes the coordinated movement of the two tRNA molecules, the mRNA and conformational changes in the ribosome. The protein is Elongation factor G of Synechococcus sp. (strain JA-3-3Ab) (Cyanobacteria bacterium Yellowstone A-Prime).